The following is a 243-amino-acid chain: Ribosomal RNA small subunit methyltransferase G (243 aa).

S-adenosyl-L-methionine contacts are provided by residues Gly-80, Phe-85, 132–133 (IE), and Arg-151.

The protein belongs to the methyltransferase superfamily. RNA methyltransferase RsmG family.

Its subcellular location is the cytoplasm. Specifically methylates the N7 position of a guanine in 16S rRNA. This chain is Ribosomal RNA small subunit methyltransferase G, found in Synechococcus sp. (strain CC9902).